The sequence spans 256 residues: 5'-nucleotidase SurE (256 aa).

Residues Asp-8, Asp-9, Ser-40, and Asn-92 each coordinate a divalent metal cation.

This sequence belongs to the SurE nucleotidase family. It depends on a divalent metal cation as a cofactor.

It localises to the cytoplasm. It carries out the reaction a ribonucleoside 5'-phosphate + H2O = a ribonucleoside + phosphate. Functionally, nucleotidase that shows phosphatase activity on nucleoside 5'-monophosphates. The protein is 5'-nucleotidase SurE of Sinorhizobium fredii (strain NBRC 101917 / NGR234).